The chain runs to 132 residues: Small ribosomal subunit protein uS8 (132 aa).

The protein belongs to the universal ribosomal protein uS8 family. Part of the 30S ribosomal subunit. Contacts proteins S5 and S12.

Its function is as follows. One of the primary rRNA binding proteins, it binds directly to 16S rRNA central domain where it helps coordinate assembly of the platform of the 30S subunit. The protein is Small ribosomal subunit protein uS8 of Parvibaculum lavamentivorans (strain DS-1 / DSM 13023 / NCIMB 13966).